A 217-amino-acid polypeptide reads, in one-letter code: Probable transaldolase (217 aa).

Residue lysine 83 is the Schiff-base intermediate with substrate of the active site.

This sequence belongs to the transaldolase family. Type 3B subfamily.

The protein localises to the cytoplasm. The enzyme catalyses D-sedoheptulose 7-phosphate + D-glyceraldehyde 3-phosphate = D-erythrose 4-phosphate + beta-D-fructose 6-phosphate. The protein operates within carbohydrate degradation; pentose phosphate pathway; D-glyceraldehyde 3-phosphate and beta-D-fructose 6-phosphate from D-ribose 5-phosphate and D-xylulose 5-phosphate (non-oxidative stage): step 2/3. Transaldolase is important for the balance of metabolites in the pentose-phosphate pathway. In Ruegeria sp. (strain TM1040) (Silicibacter sp.), this protein is Probable transaldolase.